The following is a 485-amino-acid chain: Chromosomal replication initiator protein DnaA (485 aa).

A domain I, interacts with DnaA modulators region spans residues 1–74 (MEKSKNIWSL…ILTNNGYDNV (74 aa)). Residues 74 to 140 (VTIVFTNQSP…EEEPKNFKNP (67 aa)) form a domain II region. Positions 141-357 (FLKKRYTFEN…AAVTKLKAYI (217 aa)) are domain III, AAA+ region. G185, G187, K188, and T189 together coordinate ATP. The interval 358-485 (DLDNIEIDID…TELMNKIKKN (128 aa)) is domain IV, binds dsDNA.

Belongs to the DnaA family. As to quaternary structure, oligomerizes as a right-handed, spiral filament on DNA at oriC.

The protein localises to the cytoplasm. Plays an essential role in the initiation and regulation of chromosomal replication. ATP-DnaA binds to the origin of replication (oriC) to initiate formation of the DNA replication initiation complex once per cell cycle. Binds the DnaA box (a 9 base pair repeat at the origin) and separates the double-stranded (ds)DNA. Forms a right-handed helical filament on oriC DNA; dsDNA binds to the exterior of the filament while single-stranded (ss)DNA is stabiized in the filament's interior. The ATP-DnaA-oriC complex binds and stabilizes one strand of the AT-rich DNA unwinding element (DUE), permitting loading of DNA polymerase. After initiation quickly degrades to an ADP-DnaA complex that is not apt for DNA replication. Binds acidic phospholipids. This Borreliella afzelii (strain PKo) (Borrelia afzelii) protein is Chromosomal replication initiator protein DnaA.